The chain runs to 615 residues: MASQTGQKIRLVRCPKCLKILQEDEDVPVYQCGGCSAILQAKRRNIAPSSTPSAGETERAQANEPQSVPETNNVSSSSGQDTVLPSSPGRSVDQEYEKGRNASMESTEKELDDLELSNGDGTNEIQEQECSLGDSEKNEREDNSRLESHMMNTVAEAAGSGSSSGSLSVDHVVAARASNPSGNSEISPDASPVEEKQSQLDILANKTPSAYDVVAARASNSSGNAEISPDASPVEEKQSQLDYPANKTSSAYDGSESSSDEREGQLLDDDEQWNALQKIRSGKFEMHRYPGYKEQGASSSSPFSENRRNGITTYNERHQNRSLQLEGPGGRLGRQGRRHVTEQLRPDMPFYPRESYTRGSPSHPSHDEFDRYPRAHSLQMPSYAGGMNHDFVDYMYHNNPRARGQGQGSRISGEMGRNHGGWYSGQLHNSYSSYSASPQRPMEQPEYHPRWRREIVSDVEDHQRNRHAGHHHELQTRRLRERQRVAKRHVRPTAGGAPFVSCYSCSENLQLPVDFLIFKRKHHLLRCGTCTTVLRFSLQSRNHLVPAVTHDINANRNSNSTSESPIDKAPSKPEKLRSSVQDEELPVARGSPLHRLMGYSTVSQVFKVSQRPPSI.

3 disordered regions span residues 46–271, 292–336, and 549–592; these read IAPS…DDDE, YKEQ…GRQG, and THDI…RGSP. Polar residues-rich tracts occupy residues 63-89 and 119-129; these read NEPQ…SSPG and GDGTNEIQEQE. Positions 104–129 form a coiled coil; it reads MESTEKELDDLELSNGDGTNEIQEQE. Residues 134–148 show a composition bias toward basic and acidic residues; it reads DSEKNEREDNSRLES. Residues 159-168 are compositionally biased toward low complexity; it reads GSGSSSGSLS. Composition is skewed to polar residues over residues 296–314 and 552–564; these read GASS…ITTY and INAN…TSES. Residues 565–577 are compositionally biased toward basic and acidic residues; the sequence is PIDKAPSKPEKLR.

In terms of assembly, interacts with RLK902. Binds and recruits EDR1 at the powdery mildew (e.g. G.cichoracearum) penetration site on the plasma membrane. Interacts with CHC2. In terms of tissue distribution, expressed in stems and rosette leaves, and weakly in inflorescences. Not detected in roots.

The protein localises to the cell membrane. The protein resides in the endosome. Plays a negative role in salicylic acid (SA)-mediated resistance to powdery mildew (e.g. Golovinomyces cichoracearum). May modulate plant immunity by regulating the relocation of EDR1 by interacting with CHC2 and modulating endocytosis. The polypeptide is Protein ENHANCED DISEASE RESISTANCE 4 (Arabidopsis thaliana (Mouse-ear cress)).